The sequence spans 833 residues: Leucine--tRNA ligase (833 aa).

Residues 41–52 (PYPSGAGLHVGH) carry the 'HIGH' region motif. Positions 610–614 (KMSKS) match the 'KMSKS' region motif. Lys-613 is an ATP binding site.

Belongs to the class-I aminoacyl-tRNA synthetase family.

Its subcellular location is the cytoplasm. The catalysed reaction is tRNA(Leu) + L-leucine + ATP = L-leucyl-tRNA(Leu) + AMP + diphosphate. The chain is Leucine--tRNA ligase from Streptococcus pneumoniae (strain CGSP14).